Here is a 371-residue protein sequence, read N- to C-terminus: Putative glutamate--cysteine ligase 2 (371 aa).

Belongs to the glutamate--cysteine ligase type 2 family. YbdK subfamily. As to quaternary structure, homodimer.

The enzyme catalyses L-cysteine + L-glutamate + ATP = gamma-L-glutamyl-L-cysteine + ADP + phosphate + H(+). In terms of biological role, ATP-dependent carboxylate-amine ligase which exhibits weak glutamate--cysteine ligase activity. This Cronobacter sakazakii (strain ATCC BAA-894) (Enterobacter sakazakii) protein is Putative glutamate--cysteine ligase 2.